The chain runs to 420 residues: Protein Rv2184c (420 aa).

The protein belongs to the arsA ATPase family.

The polypeptide is Protein Rv2184c (Mycobacterium tuberculosis (strain ATCC 25618 / H37Rv)).